We begin with the raw amino-acid sequence, 457 residues long: Ribosomal protein uS12 methylthiotransferase RimO (457 aa).

Residues 6–116 (PKVGFVSLGC…VMEAVHAALP (111 aa)) enclose the MTTase N-terminal domain. [4Fe-4S] cluster contacts are provided by Cys-15, Cys-51, Cys-80, Cys-147, Cys-151, and Cys-154. Residues 133-370 (LTPRHYAYLK…MARQAEISAA (238 aa)) form the Radical SAM core domain. The 69-residue stretch at 373–441 (EAKIGSVQQC…EHDLFGDALP (69 aa)) folds into the TRAM domain.

It belongs to the methylthiotransferase family. RimO subfamily. The cofactor is [4Fe-4S] cluster.

The protein resides in the cytoplasm. It carries out the reaction L-aspartate(89)-[ribosomal protein uS12]-hydrogen + (sulfur carrier)-SH + AH2 + 2 S-adenosyl-L-methionine = 3-methylsulfanyl-L-aspartate(89)-[ribosomal protein uS12]-hydrogen + (sulfur carrier)-H + 5'-deoxyadenosine + L-methionine + A + S-adenosyl-L-homocysteine + 2 H(+). Its function is as follows. Catalyzes the methylthiolation of an aspartic acid residue of ribosomal protein uS12. This is Ribosomal protein uS12 methylthiotransferase RimO from Xanthomonas campestris pv. campestris (strain 8004).